The following is a 560-amino-acid chain: Trans-activating transcriptional regulatory protein (560 aa).

Disordered stretches follow at residues 1-25 and 99-134; these read MPKNMETLQRSYMGPSTPNHNLFNN and TGAETGAAGGSKRKASEVDSDSDSDDSSKGKKLVNK.

This sequence belongs to the nucleopolyhedrovirus IE-1 protein family.

Functionally, regulatory transcriptional protein, which trans-activates gene expression from early baculovirus promoters. Can also trans-activate its own promoter, suggesting that it is autoregulated during normal infection of insect cells. The sequence is that of Trans-activating transcriptional regulatory protein (IE1) from Orgyia pseudotsugata (Douglas-fir tussock moth).